Here is a 706-residue protein sequence, read N- to C-terminus: Polyribonucleotide nucleotidyltransferase (706 aa).

2 residues coordinate Mg(2+): aspartate 486 and aspartate 492. Residues 552–611 form the KH domain; that stretch reads PRIIAMKINPEKIRDVIGKGGAVIRALTEETGTQIDIQEDGSVKIACTSMEAGELAKKRI. An S1 motif domain is found at 621 to 689; it reads GKVYEGPVIK…EKGRLRLSMK (69 aa).

It belongs to the polyribonucleotide nucleotidyltransferase family. The cofactor is Mg(2+).

Its subcellular location is the cytoplasm. It catalyses the reaction RNA(n+1) + phosphate = RNA(n) + a ribonucleoside 5'-diphosphate. Functionally, involved in mRNA degradation. Catalyzes the phosphorolysis of single-stranded polyribonucleotides processively in the 3'- to 5'-direction. The protein is Polyribonucleotide nucleotidyltransferase of Thiobacillus denitrificans (strain ATCC 25259 / T1).